We begin with the raw amino-acid sequence, 258 residues long: Aquaglyceroporin (258 aa).

Residues 1-11 (MHMLFYKSYVR) are Cytoplasmic-facing. A helical transmembrane segment spans residues 12-32 (EFIGEFLGTFVLMFLGEGATA). Over 33-45 (NFHTTGLSGDWYK) the chain is Extracellular. The helical transmembrane segment at 46-66 (LCLGWGLAVFFGILVSAKLSG) threads the bilayer. Glycerol contacts are provided by Gly66, Ala67, and Asn70. Residues 67–87 (AHLNLAVSIGLSSINKFDLKK) lie on the Cytoplasmic side of the membrane. Residues 88-108 (IPVYFFAQLLGAFVGTSTVYG) traverse the membrane as a helical segment. The Extracellular portion of the chain corresponds to 109-135 (LYHGFISNSKIPQFAWETSRNPSISLT). Ser127 provides a ligand contact to glycerol. A helical transmembrane segment spans residues 136–156 (GAFFNELILTGILLLVILVVV). Residues 157–171 (DENICGKFHILKLSS) are Cytoplasmic-facing. Residues 172–192 (VVGLIILCIGITFGGNTGFAL) form a helical membrane-spanning segment. Gly189, Phe190, Asn193, and Arg196 together coordinate glycerol. Residues 193–217 (NPSRDLGSRFLSLIAYGKDTFTKDN) lie on the Extracellular side of the membrane. Residues 218-238 (FYFWVPLVAPCVGSVVFCQFY) form a helical membrane-spanning segment. The Cytoplasmic portion of the chain corresponds to 239–258 (DKVICPLVDLANNEKDGVDL).

It belongs to the MIP/aquaporin (TC 1.A.8) family. Homotetramer.

It is found in the cell membrane. It carries out the reaction H2O(in) = H2O(out). The enzyme catalyses glycerol(in) = glycerol(out). It catalyses the reaction urea(in) = urea(out). The catalysed reaction is NH4(+)(in) = NH4(+)(out). It carries out the reaction methylamine(out) = methylamine(in). The enzyme catalyses formamide(out) = formamide(in). Mediates water and glycerol transport across the cell membrane. Permeable to sugar alcohols of up to five carbons and urea. Permeable to ammonia, methylamine and formamide. This chain is Aquaglyceroporin, found in Plasmodium falciparum (isolate 3D7).